Reading from the N-terminus, the 730-residue chain is Protein folded gastrulation (730 aa).

Residues 1 to 21 (MSPPNCLLAVLALTVFIGANN) form the signal peptide. N-linked (GlcNAc...) asparagine glycans are attached at residues asparagine 51 and asparagine 193. Low complexity predominate over residues 197 to 211 (TPETSTSITPTSTTT). The segment at 197–222 (TPETSTSITPTSTTTFAVPSVPSGEA) is disordered. Asparagine 252 and asparagine 289 each carry an N-linked (GlcNAc...) asparagine glycan. The segment covering 361-385 (ELEEEVGEEEVTATDILPSEEDEYT) has biased composition (acidic residues). The interval 361–424 (ELEEEVGEEE…SPHPPEEPEI (64 aa)) is disordered. The span at 386-415 (TETATTTGDTTVAEASMDTSTATSTSGQSS) shows a compositional bias: low complexity. The N-linked (GlcNAc...) asparagine glycan is linked to asparagine 459. 2 disordered regions span residues 474 to 526 (EDES…GGHK) and 545 to 583 (KGKQ…TTTT). The segment covering 478 to 491 (STTTATPEPSSSTP) has biased composition (low complexity). Residues 504-513 (DNDNLMTNTI) are compositionally biased toward polar residues. Positions 567–583 (TSALTSTSTEDATTTTT) are enriched in low complexity. 2 N-linked (GlcNAc...) asparagine glycosylation sites follow: asparagine 590 and asparagine 639. A compositionally biased stretch (low complexity) spans 663 to 676 (SAASTESAGTAATT). A disordered region spans residues 663–683 (SAASTESAGTAATTPNSSSNP). The N-linked (GlcNAc...) asparagine glycan is linked to asparagine 678.

In terms of processing, may be highly O-glycosylated in its Ser/Thr-rich C-terminal part. Expressed in the invagination primordia in a pattern that precisely precedes the pattern of constrictions.

It is found in the secreted. Its subcellular location is the extracellular space. The protein localises to the extracellular matrix. In terms of biological role, coordinates cell shape changes during formation of the ventral furrow and invagination of the posterior midgut primordium, by inducing apical constriction of cells in spatially and temporally defined manners. Could function as a secreted signal to initiate apical constriction by acting as a ligand for an unidentified G protein-coupled receptor, which in turn activates the G protein alpha subunit encoded by concertina, in neighboring cells. Such an intracellular pathway would ultimately induce contraction of the apical actin-myosin network. In the ventral furrow, fog appears to ensure that all the cells initiate constriction within several minutes of each other. In the posterior midgut invagination, fog appears to direct the ordered progression of constriction initiations out from a central region and also to delimit the peripheral extent of this spreading. In Drosophila melanogaster (Fruit fly), this protein is Protein folded gastrulation (fog).